A 111-amino-acid chain; its full sequence is Probable monothiol glutaredoxin 2 (111 aa).

One can recognise a Glutaredoxin domain in the interval 7 to 109 (LKFIQNAIKK…KMLKDETKLI (103 aa)). Residue K24 participates in glutathione binding. C32 is a binding site for [2Fe-2S] cluster. Glutathione contacts are provided by residues R61, F73, and 86–87 (CD).

The protein belongs to the glutaredoxin family. Monothiol subfamily.

The polypeptide is Probable monothiol glutaredoxin 2 (grxC2) (Rickettsia typhi (strain ATCC VR-144 / Wilmington)).